Reading from the N-terminus, the 244-residue chain is tRNA1(Val) (adenine(37)-N6)-methyltransferase (244 aa).

It belongs to the methyltransferase superfamily. tRNA (adenine-N(6)-)-methyltransferase family.

It localises to the cytoplasm. It carries out the reaction adenosine(37) in tRNA1(Val) + S-adenosyl-L-methionine = N(6)-methyladenosine(37) in tRNA1(Val) + S-adenosyl-L-homocysteine + H(+). Functionally, specifically methylates the adenine in position 37 of tRNA(1)(Val) (anticodon cmo5UAC). The protein is tRNA1(Val) (adenine(37)-N6)-methyltransferase of Photorhabdus laumondii subsp. laumondii (strain DSM 15139 / CIP 105565 / TT01) (Photorhabdus luminescens subsp. laumondii).